The chain runs to 454 residues: Histidine--tRNA ligase (454 aa).

Belongs to the class-II aminoacyl-tRNA synthetase family. In terms of assembly, homodimer.

Its subcellular location is the cytoplasm. It carries out the reaction tRNA(His) + L-histidine + ATP = L-histidyl-tRNA(His) + AMP + diphosphate + H(+). This is Histidine--tRNA ligase from Bacteroides fragilis (strain YCH46).